The chain runs to 166 residues: Phosphopantetheine adenylyltransferase (166 aa).

Threonine 10 lines the substrate pocket. ATP contacts are provided by residues 10–11 (TF) and histidine 18. Substrate-binding residues include lysine 42, leucine 75, and arginine 89. Residues 90–92 (GVR), glutamate 100, and 125–131 (YTYVAST) contribute to the ATP site.

This sequence belongs to the bacterial CoaD family. In terms of assembly, homohexamer. It depends on Mg(2+) as a cofactor.

The protein localises to the cytoplasm. It catalyses the reaction (R)-4'-phosphopantetheine + ATP + H(+) = 3'-dephospho-CoA + diphosphate. The protein operates within cofactor biosynthesis; coenzyme A biosynthesis; CoA from (R)-pantothenate: step 4/5. Reversibly transfers an adenylyl group from ATP to 4'-phosphopantetheine, yielding dephospho-CoA (dPCoA) and pyrophosphate. This is Phosphopantetheine adenylyltransferase from Chlorobaculum parvum (strain DSM 263 / NCIMB 8327) (Chlorobium vibrioforme subsp. thiosulfatophilum).